The sequence spans 61 residues: Bacteriocin leucocin-B (61 aa).

The propeptide occupies 1–24 (MNNMKSADNYQQLDNNALEQVVGG). C33 and C38 form a disulfide bridge.

It belongs to the bacteriocin class IIA/YGNGV family.

Its subcellular location is the secreted. In terms of biological role, active against L.monocytogenes and several lactic acid bacteria. The polypeptide is Bacteriocin leucocin-B (Leuconostoc carnosum).